Here is a 198-residue protein sequence, read N- to C-terminus: GTP cyclohydrolase 1 (198 aa).

The Zn(2+) site is built by cysteine 87, histidine 90, and cysteine 158.

It belongs to the GTP cyclohydrolase I family. In terms of assembly, homomer.

It catalyses the reaction GTP + H2O = 7,8-dihydroneopterin 3'-triphosphate + formate + H(+). It participates in cofactor biosynthesis; 7,8-dihydroneopterin triphosphate biosynthesis; 7,8-dihydroneopterin triphosphate from GTP: step 1/1. This is GTP cyclohydrolase 1 from Janthinobacterium sp. (strain Marseille) (Minibacterium massiliensis).